The primary structure comprises 129 residues: Fluoride-specific ion channel FluC (129 aa).

4 helical membrane passes run 8 to 28 (FFCV…MVLA), 36 to 56 (AFPF…GLLL), 71 to 91 (FLGV…VEVV), and 103 to 123 (ALHI…AMML). 2 residues coordinate Na(+): Gly-78 and Thr-81.

The protein belongs to the fluoride channel Fluc/FEX (TC 1.A.43) family.

The protein localises to the cell inner membrane. It carries out the reaction fluoride(in) = fluoride(out). Na(+) is not transported, but it plays an essential structural role and its presence is essential for fluoride channel function. Its function is as follows. Fluoride-specific ion channel. Important for reducing fluoride concentration in the cell, thus reducing its toxicity. This is Fluoride-specific ion channel FluC from Idiomarina loihiensis (strain ATCC BAA-735 / DSM 15497 / L2-TR).